We begin with the raw amino-acid sequence, 398 residues long: MNYNKKSIEDIDVKGKKVLVRCDFNVPLNEGKITDENRLVGALPTIKYLMGKGAKIILCSHMGKPKGEPKKELSLLPVAKRLSEMLNKEVIFADDDNVVGENAKRAVEDMKDGDVVLLQNTRYRKEETKNEEVFSKELASLADVFVNDAFGTAHRAHCSTVGVTNYLKEAACGYLIQKELKFLGNAVEKPERPFVAILGGAKVSDKINVINNLLDKVDTLIIGGGMGYTFLKAQGYTIGNSLVEEDKVEYSKEMIDKAKEKGVNLLLPIDNVVADKFDKDASPVVTEDQNIGEGYMGLDIGPKTAKIYSDAIKSAKTVVWNGPMGVFEFKSFANGTIEVAKAMADSDAVTIIGGGDSAAAVNILGFGDKMTHISTGGGASLEFLEGKELPGIAALNDK.

Residues 23–25, Arg38, 61–64, Arg122, and Arg155 contribute to the substrate site; these read DFN and HMGK. ATP contacts are provided by residues Lys206, Gly297, Glu328, and 354-357; that span reads GGDS.

Belongs to the phosphoglycerate kinase family. Monomer.

The protein resides in the cytoplasm. It catalyses the reaction (2R)-3-phosphoglycerate + ATP = (2R)-3-phospho-glyceroyl phosphate + ADP. The protein operates within carbohydrate degradation; glycolysis; pyruvate from D-glyceraldehyde 3-phosphate: step 2/5. The sequence is that of Phosphoglycerate kinase from Clostridium botulinum (strain Okra / Type B1).